Here is a 280-residue protein sequence, read N- to C-terminus: MRTYLDLLQHILDNGGDKGDRTGTGTRSVFGHQMRFDLSQGFPLLTTKKVHFRSIVIELLWFLKGDTNVQYLKDHKVSIWDEWATAEQTARFGRPEGELGPVYGHQWRNFGATQNSDGSYKNDGFDQIKWLINEIKTNPNSRRLIVSGWNPNEAGQVALPPCHTLFQFFVQDGKLSCQLYQRSADVFLGVPFNIASYALLTHMIAQVCGLGVGDFVWTGGDTHLYANHFEQAQLQLTREPLPLCQLKLNPEITDLFDFKFEDIEIVDYQSHPAIKAPVAV.

A dUMP-binding site is contributed by Arg21. His51 provides a ligand contact to (6R)-5,10-methylene-5,6,7,8-tetrahydrofolate. DUMP is bound at residue 142 to 143 (RR). Cys162 serves as the catalytic Nucleophile. DUMP contacts are provided by residues 182–185 (RSAD), Asn193, and 223–225 (HLY). Asp185 lines the (6R)-5,10-methylene-5,6,7,8-tetrahydrofolate pocket. Ala279 provides a ligand contact to (6R)-5,10-methylene-5,6,7,8-tetrahydrofolate.

It belongs to the thymidylate synthase family. Bacterial-type ThyA subfamily. Homodimer.

It is found in the cytoplasm. It catalyses the reaction dUMP + (6R)-5,10-methylene-5,6,7,8-tetrahydrofolate = 7,8-dihydrofolate + dTMP. Its pathway is pyrimidine metabolism; dTTP biosynthesis. Functionally, catalyzes the reductive methylation of 2'-deoxyuridine-5'-monophosphate (dUMP) to 2'-deoxythymidine-5'-monophosphate (dTMP) while utilizing 5,10-methylenetetrahydrofolate (mTHF) as the methyl donor and reductant in the reaction, yielding dihydrofolate (DHF) as a by-product. This enzymatic reaction provides an intracellular de novo source of dTMP, an essential precursor for DNA biosynthesis. The polypeptide is Thymidylate synthase (Acinetobacter baylyi (strain ATCC 33305 / BD413 / ADP1)).